The sequence spans 439 residues: Dolichyl-diphosphooligosaccharide--protein glycosyltransferase 48 kDa subunit (439 aa).

A signal peptide spans 1–25; the sequence is MELGAAARAWSLLWLLLPLLGLVGA. The Lumenal segment spans residues 27 to 410; the sequence is GPRTLVLLDN…YERFIPSAYP (384 aa). Residues 411–430 traverse the membrane as a helical segment; that stretch reads YYASAFSMMVGLFIFSVVFL. At 431–439 the chain is on the cytoplasmic side; it reads HMKEKEKSD.

Belongs to the DDOST 48 kDa subunit family. As to quaternary structure, component of the oligosaccharyltransferase (OST) complex. OST exists in two different complex forms which contain common core subunits RPN1, RPN2, OST48, OST4, DAD1 and TMEM258, either STT3A or STT3B as catalytic subunits, and form-specific accessory subunits. STT3A complex assembly occurs through the formation of 3 subcomplexes. Subcomplex 1 contains RPN1 and TMEM258, subcomplex 2 contains the STT3A-specific subunits STT3A, DC2/OSTC, and KCP2 as well as the core subunit OST4, and subcomplex 3 contains RPN2, DAD1, and OST48. The STT3A complex can form stable complexes with the Sec61 complex or with both the Sec61 and TRAP complexes. Interacts with SMIM22.

It is found in the endoplasmic reticulum membrane. Its pathway is protein modification; protein glycosylation. Subunit of the oligosaccharyl transferase (OST) complex that catalyzes the initial transfer of a defined glycan (Glc(3)Man(9)GlcNAc(2) in eukaryotes) from the lipid carrier dolichol-pyrophosphate to an asparagine residue within an Asn-X-Ser/Thr consensus motif in nascent polypeptide chains, the first step in protein N-glycosylation. N-glycosylation occurs cotranslationally and the complex associates with the Sec61 complex at the channel-forming translocon complex that mediates protein translocation across the endoplasmic reticulum (ER). All subunits are required for a maximal enzyme activity. Required for the assembly of both SST3A- and SS3B-containing OST complexes. The sequence is that of Dolichyl-diphosphooligosaccharide--protein glycosyltransferase 48 kDa subunit from Sus scrofa (Pig).